The chain runs to 355 residues: Ubiquinone biosynthesis protein COQ4 homolog, mitochondrial (355 aa).

Histidine 134, aspartate 135, histidine 138, and glutamate 150 together coordinate Zn(2+).

Belongs to the COQ4 family. As to quaternary structure, component of a multi-subunit COQ enzyme complex. Zn(2+) serves as cofactor.

The protein localises to the mitochondrion inner membrane. The enzyme catalyses a 4-hydroxy-3-methoxy-5-(all-trans-polyprenyl)benzoate + H(+) = a 2-methoxy-6-(all-trans-polyprenyl)phenol + CO2. It participates in cofactor biosynthesis; ubiquinone biosynthesis. Functionally, lyase that catalyzes the C1-decarboxylation of 4-hydroxy-3-methoxy-5-(all-trans-polyprenyl)benzoic acid into 2-methoxy-6-(all-trans-polyprenyl)phenol during ubiquinone biosynthesis. The sequence is that of Ubiquinone biosynthesis protein COQ4 homolog, mitochondrial from Plasmodium vivax (strain Salvador I).